The chain runs to 205 residues: Ribosomal RNA small subunit methyltransferase G (205 aa).

Residues Gly73, Leu78, 124-125 (VE), and Arg138 contribute to the S-adenosyl-L-methionine site.

The protein belongs to the methyltransferase superfamily. RNA methyltransferase RsmG family.

Its subcellular location is the cytoplasm. It catalyses the reaction guanosine(527) in 16S rRNA + S-adenosyl-L-methionine = N(7)-methylguanosine(527) in 16S rRNA + S-adenosyl-L-homocysteine. In terms of biological role, specifically methylates the N7 position of guanine in position 527 of 16S rRNA. The polypeptide is Ribosomal RNA small subunit methyltransferase G (Actinobacillus pleuropneumoniae serotype 5b (strain L20)).